We begin with the raw amino-acid sequence, 123 residues long: PCNA-associated factor (123 aa).

The segment at 1–123 (MVRTKADCAG…SEEAADSGDE (123 aa)) is disordered. A D-box motif is present at residues 26–37 (RKTFGSSSSGSN). A PIP-box motif is present at residues 66 to 77 (QKGIGDFFGSPS). Residues 83–85 (KEN) carry the KEN box motif. The short motif at 93-105 (EAGGSGAGKKPRK) is the Initiation motif element. Acidic residues predominate over residues 113-123 (PSEEAADSGDE).

Interacts with pcna.

The protein resides in the nucleus. It localises to the cytoplasm. It is found in the perinuclear region. PCNA-binding protein that acts as a regulator of DNA repair during DNA replication. Following DNA damage, the interaction with pcna is disrupted, facilitating the interaction between monoubiquitinated pcna and the translesion DNA synthesis DNA polymerase eta (polh) at stalled replisomes, facilitating the bypass of replication-fork-blocking lesions. Also acts as a regulator of centrosome number. The chain is PCNA-associated factor from Xenopus laevis (African clawed frog).